The chain runs to 227 residues: NADH-quinone oxidoreductase subunit C (227 aa).

It belongs to the complex I 30 kDa subunit family. As to quaternary structure, NDH-1 is composed of 14 different subunits. Subunits NuoB, C, D, E, F, and G constitute the peripheral sector of the complex.

It localises to the cell inner membrane. The enzyme catalyses a quinone + NADH + 5 H(+)(in) = a quinol + NAD(+) + 4 H(+)(out). In terms of biological role, NDH-1 shuttles electrons from NADH, via FMN and iron-sulfur (Fe-S) centers, to quinones in the respiratory chain. The immediate electron acceptor for the enzyme in this species is believed to be ubiquinone. Couples the redox reaction to proton translocation (for every two electrons transferred, four hydrogen ions are translocated across the cytoplasmic membrane), and thus conserves the redox energy in a proton gradient. The polypeptide is NADH-quinone oxidoreductase subunit C (Legionella pneumophila (strain Paris)).